The chain runs to 117 residues: Antimicrobial peptide AmAMP1 (117 aa).

The N-terminal stretch at 1 to 25 is a signal peptide; sequence MPSIRVLFVLLAVILLFMEVKMTSA. Residues 26 to 73 constitute a propeptide that is removed on maturation; sequence ASIVKDVDEDETLENEDGEAMENSWPWHGVEDTSDYSDLSDLANSEKR. Intrachain disulfides connect cysteine 76–cysteine 115, cysteine 85–cysteine 108, and cysteine 94–cysteine 112.

This sequence belongs to the coral AMP family.

The protein resides in the secreted. Coral peptide that probably acts as an antimicrobial peptide in the surface mucous layer of planula larvae and likely also in adults. Shows moderate to high activity against some Gram-negative and Gram-positive bacteria (tested on E.coli, B.megaterium, S.aureus, E.aesturaii, B.algicola, Acinetobacter spec.). Does not show antibacterial activity against the coral pathogen V.coralliilyticus. This Acropora millepora (Staghorn coral) protein is Antimicrobial peptide AmAMP1.